Here is a 37-residue protein sequence, read N- to C-terminus: Large ribosomal subunit protein bL36 (37 aa).

The protein belongs to the bacterial ribosomal protein bL36 family.

This is Large ribosomal subunit protein bL36 from Solidesulfovibrio magneticus (strain ATCC 700980 / DSM 13731 / RS-1) (Desulfovibrio magneticus).